We begin with the raw amino-acid sequence, 233 residues long: Aspartate/glutamate leucyltransferase (233 aa).

It belongs to the R-transferase family. Bpt subfamily.

Its subcellular location is the cytoplasm. The catalysed reaction is N-terminal L-glutamyl-[protein] + L-leucyl-tRNA(Leu) = N-terminal L-leucyl-L-glutamyl-[protein] + tRNA(Leu) + H(+). It catalyses the reaction N-terminal L-aspartyl-[protein] + L-leucyl-tRNA(Leu) = N-terminal L-leucyl-L-aspartyl-[protein] + tRNA(Leu) + H(+). In terms of biological role, functions in the N-end rule pathway of protein degradation where it conjugates Leu from its aminoacyl-tRNA to the N-termini of proteins containing an N-terminal aspartate or glutamate. This chain is Aspartate/glutamate leucyltransferase, found in Vibrio cholerae serotype O1 (strain ATCC 39541 / Classical Ogawa 395 / O395).